The chain runs to 300 residues: Probable alpha-L-glutamate ligase (300 aa).

An ATP-grasp domain is found at 104 to 287; it reads LQLLARQGID…IAGRMIQWIE (184 aa). ATP is bound by residues Lys141, 178-179, Asp187, and 211-213; these read EY and RSN. Mg(2+)-binding residues include Asp248, Glu260, and Asn262. Mn(2+) contacts are provided by Asp248, Glu260, and Asn262.

The protein belongs to the RimK family. Mg(2+) is required as a cofactor. Requires Mn(2+) as cofactor.

This Citrobacter koseri (strain ATCC BAA-895 / CDC 4225-83 / SGSC4696) protein is Probable alpha-L-glutamate ligase.